The chain runs to 400 residues: Protein phosphatase methylesterase 1 (400 aa).

The interval 32–70 (DENDGDALGSLPSFNGQSNRNRKYTGKTGSTTDRISSKE) is disordered. The AB hydrolase-1 domain maps to 114–365 (PIFIFHHGAG…DSGHFIQEDS (252 aa)). Active-site residues include serine 205, aspartate 233, and histidine 359.

Belongs to the AB hydrolase superfamily. Interacts with and inactivates the phosphatase PP2A-like catalytic subunits PPG1, PPH21, PPH22, PPH3 and SIT4.

The enzyme catalyses [phosphatase 2A protein]-C-terminal L-leucine methyl ester + H2O = [phosphatase 2A protein]-C-terminal L-leucine + methanol + H(+). Demethylates proteins that have been reversibly carboxymethylated. Demethylates the phosphatase PP2A catalytic subunits PPH21 and PPH22. Forms inactive complexes (PP2Ai) with phosphatase PP2A-like catalytic subunits. Involved in the regulation of cell cycle progression at START. This is Protein phosphatase methylesterase 1 (PPE1) from Saccharomyces cerevisiae (strain ATCC 204508 / S288c) (Baker's yeast).